The primary structure comprises 528 residues: Peptide chain release factor 3 (528 aa).

The tr-type G domain maps to 11 to 279 (SDRRTFAIIS…GFVEWAPAPI (269 aa)). GTP is bound by residues 20–27 (SHPDAGKT), 88–92 (DTPGH), and 142–145 (NKMD).

The protein belongs to the TRAFAC class translation factor GTPase superfamily. Classic translation factor GTPase family. PrfC subfamily.

The protein localises to the cytoplasm. In terms of biological role, increases the formation of ribosomal termination complexes and stimulates activities of RF-1 and RF-2. It binds guanine nucleotides and has strong preference for UGA stop codons. It may interact directly with the ribosome. The stimulation of RF-1 and RF-2 is significantly reduced by GTP and GDP, but not by GMP. The sequence is that of Peptide chain release factor 3 from Marinomonas sp. (strain MWYL1).